Here is a 746-residue protein sequence, read N- to C-terminus: Protein psiN (746 aa).

The first 23 residues, 1–23, serve as a signal peptide directing secretion; the sequence is MGNINKKLFYFLIQLITILIVLS. At 24 to 679 the chain is on the extracellular side; the sequence is DDSYNSLLPL…KCQSAAVKAA (656 aa). Residues N97 and N124 are each glycosylated (N-linked (GlcNAc...) asparagine). Residues 125 to 276 enclose the PA14 domain; sequence VTSDDPRIYS…YDYCGVCEGM (152 aa). Residues N319, N353, N380, N477, N553, N628, and N654 are each glycosylated (N-linked (GlcNAc...) asparagine). A helical membrane pass occupies residues 680 to 700; that stretch reads VGVGAGAAAGIAIGGAIALGL. Residues 701-746 are Cytoplasmic-facing; it reads AAFGGKRGYDAWKSSRDNQIQTSSENPLYNPNPNQGDNPLYAANNS. The segment at 714–746 is disordered; it reads SSRDNQIQTSSENPLYNPNPNQGDNPLYAANNS. Residues 717 to 746 are compositionally biased toward polar residues; that stretch reads DNQIQTSSENPLYNPNPNQGDNPLYAANNS.

It belongs to the prespore-cell-inducing factor family.

The protein resides in the membrane. The protein is Protein psiN (psiN) of Dictyostelium discoideum (Social amoeba).